The chain runs to 155 residues: 3-dehydroquinate dehydratase (155 aa).

Residue Tyr-22 is the Proton acceptor of the active site. Positions 73, 79, and 86 each coordinate substrate. His-99 (proton donor) is an active-site residue. Residues 100–101 and Arg-110 contribute to the substrate site; that span reads IS.

This sequence belongs to the type-II 3-dehydroquinase family. In terms of assembly, homododecamer.

It catalyses the reaction 3-dehydroquinate = 3-dehydroshikimate + H2O. It participates in metabolic intermediate biosynthesis; chorismate biosynthesis; chorismate from D-erythrose 4-phosphate and phosphoenolpyruvate: step 3/7. Functionally, catalyzes a trans-dehydration via an enolate intermediate. The polypeptide is 3-dehydroquinate dehydratase (Campylobacter hominis (strain ATCC BAA-381 / DSM 21671 / CCUG 45161 / LMG 19568 / NCTC 13146 / CH001A)).